Here is a 313-residue protein sequence, read N- to C-terminus: Small ribosomal subunit protein uS2 (313 aa).

The span at 234 to 243 (DEEAKEEKTK) shows a compositional bias: basic and acidic residues. Positions 234–313 (DEEAKEEKTK…ASKAEAEEGK (80 aa)) are disordered. A compositionally biased stretch (basic residues) spans 244–256 (AKTTAKKVVTKKA). Residues 266–297 (AEKKSEKPTTEKRPTKEAAETKETSEEPKTKE) show a composition bias toward basic and acidic residues.

The protein belongs to the universal ribosomal protein uS2 family.

The protein is Small ribosomal subunit protein uS2 of Coxiella burnetii (strain Dugway 5J108-111).